A 618-amino-acid polypeptide reads, in one-letter code: DNA mismatch repair protein MutL (618 aa).

The segment at 367-402 is disordered; sequence EPTTAREPATPRYSGGASGGNGGRQTAGGWPHAQPG. A compositionally biased stretch (gly residues) spans 382 to 392; it reads GASGGNGGRQT.

This sequence belongs to the DNA mismatch repair MutL/HexB family.

Its function is as follows. This protein is involved in the repair of mismatches in DNA. It is required for dam-dependent methyl-directed DNA mismatch repair. May act as a 'molecular matchmaker', a protein that promotes the formation of a stable complex between two or more DNA-binding proteins in an ATP-dependent manner without itself being part of a final effector complex. The sequence is that of DNA mismatch repair protein MutL from Salmonella paratyphi A (strain ATCC 9150 / SARB42).